A 312-amino-acid chain; its full sequence is Olfactory receptor 2J2 (312 aa).

The Extracellular segment spans residues 1–26 (MMIKKNASSEDFFILLGFSNWPQLEV). A glycan (N-linked (GlcNAc...) asparagine) is linked at Asn6. Residues 27–50 (VLFVVILIFYLMTLTGNLFIIILS) traverse the membrane as a helical segment. Topologically, residues 51-58 (YVDSHLHT) are cytoplasmic. The helical transmembrane segment at 59–80 (PMYFFLSNLSFLDLCHTTSSIP) threads the bilayer. At 81–101 (QLLVNLRGPEKTISYAGCMVQ) the chain is on the extracellular side. Residues Cys98 and Cys190 are joined by a disulfide bond. The chain crosses the membrane as a helical span at residues 102–121 (LYFVLALGIAECVLLVVMSY). Over 122–140 (DRYVAVCRPLHYTVLMHPR) the chain is Cytoplasmic. The helical transmembrane segment at 141–159 (FCHLLAAASWVIGFTISAL) threads the bilayer. Over 160–196 (HSSFTFWVPLCGHRLVDHFFCEVPALLRLSCVDTHAN) the chain is Extracellular. A helical membrane pass occupies residues 197–220 (ELTLMVMSSIFVLIPLILILTAYG). Over 221 to 237 (AIARAVLSMQSTTGLQK) the chain is Cytoplasmic. Residues 238–260 (VFRTCGAHLMVVSLFFIPVMCMY) traverse the membrane as a helical segment. The Extracellular portion of the chain corresponds to 261–273 (LQPPSENSPDQGK). A helical transmembrane segment spans residues 274-293 (FIALFYTVVTPSLNPLIYTL). Residues 294 to 312 (RNKHVKGAAKRLLGWEWGK) lie on the Cytoplasmic side of the membrane.

The protein belongs to the G-protein coupled receptor 1 family.

The protein localises to the cell membrane. In terms of biological role, odorant receptor. The chain is Olfactory receptor 2J2 (OR2J2) from Homo sapiens (Human).